The following is a 404-amino-acid chain: Argininosuccinate synthase (404 aa).

ATP is bound by residues 12-20 (AYSGGLDTS) and Ala-40. L-citrulline contacts are provided by Tyr-92 and Ser-97. Gly-122 contacts ATP. Positions 124, 128, and 129 each coordinate L-aspartate. Asn-128 contributes to the L-citrulline binding site. Residues Arg-132, Ser-181, Ser-190, Glu-266, and Tyr-278 each coordinate L-citrulline.

The protein belongs to the argininosuccinate synthase family. Type 1 subfamily. As to quaternary structure, homotetramer.

Its subcellular location is the cytoplasm. It carries out the reaction L-citrulline + L-aspartate + ATP = 2-(N(omega)-L-arginino)succinate + AMP + diphosphate + H(+). Its pathway is amino-acid biosynthesis; L-arginine biosynthesis; L-arginine from L-ornithine and carbamoyl phosphate: step 2/3. This is Argininosuccinate synthase from Erwinia tasmaniensis (strain DSM 17950 / CFBP 7177 / CIP 109463 / NCPPB 4357 / Et1/99).